Consider the following 285-residue polypeptide: Pantothenate synthetase (285 aa).

Residue methionine 30 to histidine 37 participates in ATP binding. Residue histidine 37 is the Proton donor of the active site. Glutamine 61 serves as a coordination point for (R)-pantoate. Beta-alanine is bound at residue glutamine 61. Position 147-150 (glycine 147–aspartate 150) interacts with ATP. A (R)-pantoate-binding site is contributed by glutamine 153. ATP contacts are provided by residues valine 176 and lysine 184 to arginine 187.

It belongs to the pantothenate synthetase family. Homodimer.

The protein resides in the cytoplasm. It carries out the reaction (R)-pantoate + beta-alanine + ATP = (R)-pantothenate + AMP + diphosphate + H(+). Its pathway is cofactor biosynthesis; (R)-pantothenate biosynthesis; (R)-pantothenate from (R)-pantoate and beta-alanine: step 1/1. Functionally, catalyzes the condensation of pantoate with beta-alanine in an ATP-dependent reaction via a pantoyl-adenylate intermediate. The sequence is that of Pantothenate synthetase from Listeria monocytogenes serovar 1/2a (strain ATCC BAA-679 / EGD-e).